Here is a 64-residue protein sequence, read N- to C-terminus: Large ribosomal subunit protein bL35 (64 aa).

The segment at 1–55 is disordered; it reads MPKMKSNKSVAARFKLTGSGQLKRTRPGKRHKLSKRSSQQKRNLSKQPLVDQGQV. The segment covering 23–39 has biased composition (basic residues); sequence KRTRPGKRHKLSKRSSQ.

It belongs to the bacterial ribosomal protein bL35 family.

This chain is Large ribosomal subunit protein bL35, found in Chlamydia muridarum (strain MoPn / Nigg).